A 319-amino-acid polypeptide reads, in one-letter code: Transaldolase (319 aa).

Lysine 126 functions as the Schiff-base intermediate with substrate in the catalytic mechanism.

Belongs to the transaldolase family. Type 1 subfamily. Homodimer.

It is found in the cytoplasm. It catalyses the reaction D-sedoheptulose 7-phosphate + D-glyceraldehyde 3-phosphate = D-erythrose 4-phosphate + beta-D-fructose 6-phosphate. The protein operates within carbohydrate degradation; pentose phosphate pathway; D-glyceraldehyde 3-phosphate and beta-D-fructose 6-phosphate from D-ribose 5-phosphate and D-xylulose 5-phosphate (non-oxidative stage): step 2/3. In terms of biological role, transaldolase is important for the balance of metabolites in the pentose-phosphate pathway. The chain is Transaldolase from Bordetella avium (strain 197N).